A 206-amino-acid polypeptide reads, in one-letter code: MLSAQLEAYLAEINLPATAEQKKQLLDFVGMLNKWNKAYNLTSVRDPEAMLVRHIMDSLVVSPHLQGEHFIDVGTGPGLPGIPLAIMNPDKTFVLLDSLGKRIRFQKQVAFELGIHNISSIESRVEAYQPEQKFDGVLSRAFASIHDMLTWCHHLPAEHGQFYALKGQLSDEEMQQIPAGFVVTETIELKVPRLDEQRHLLKIIKE.

Residues Gly74, Leu79, 125–126, and Arg140 contribute to the S-adenosyl-L-methionine site; that span reads VE.

This sequence belongs to the methyltransferase superfamily. RNA methyltransferase RsmG family.

The protein resides in the cytoplasm. It catalyses the reaction guanosine(527) in 16S rRNA + S-adenosyl-L-methionine = N(7)-methylguanosine(527) in 16S rRNA + S-adenosyl-L-homocysteine. In terms of biological role, specifically methylates the N7 position of guanine in position 527 of 16S rRNA. The chain is Ribosomal RNA small subunit methyltransferase G from Shewanella sp. (strain MR-7).